The chain runs to 212 residues: Calaxin (212 aa).

EF-hand domains are found at residues T65–G100, T101–K136, and G146–L181. Residues D78, D80, D82, C84, E89, D114, N116, D118, E125, D159, D161, D163, K165, and D170 each coordinate Ca(2+).

Component of the outer dynein arm-docking complex along with ODAD1, ODAD2, ODAD3 and ODAD4.

It localises to the cytoplasm. The protein localises to the cytoskeleton. The protein resides in the cilium axoneme. It is found in the cell projection. Its subcellular location is the cilium. It localises to the flagellum. In terms of biological role, component of the outer dynein arm-docking complex (ODA-DC) that mediates outer dynein arms (ODA) binding onto the doublet microtubule. Seems to regulate the assembly of both ODAs and their axonemal docking complex onto ciliary microtubules. Regulates ciliary and flagellar motility and is required for cilia-driven determination of body laterality. This chain is Calaxin (Clxn), found in Mus musculus (Mouse).